The chain runs to 404 residues: Probable tRNA sulfurtransferase (404 aa).

The THUMP domain maps to 61–166 (EAVSERLKDV…SGYSYIMCDE (106 aa)). Residues 184–185 (LL), 209–210 (HF), Arg266, Gly288, and Gln297 contribute to the ATP site.

It belongs to the ThiI family.

The protein resides in the cytoplasm. The enzyme catalyses [ThiI sulfur-carrier protein]-S-sulfanyl-L-cysteine + a uridine in tRNA + 2 reduced [2Fe-2S]-[ferredoxin] + ATP + H(+) = [ThiI sulfur-carrier protein]-L-cysteine + a 4-thiouridine in tRNA + 2 oxidized [2Fe-2S]-[ferredoxin] + AMP + diphosphate. It carries out the reaction [ThiS sulfur-carrier protein]-C-terminal Gly-Gly-AMP + S-sulfanyl-L-cysteinyl-[cysteine desulfurase] + AH2 = [ThiS sulfur-carrier protein]-C-terminal-Gly-aminoethanethioate + L-cysteinyl-[cysteine desulfurase] + A + AMP + 2 H(+). Its pathway is cofactor biosynthesis; thiamine diphosphate biosynthesis. In terms of biological role, catalyzes the ATP-dependent transfer of a sulfur to tRNA to produce 4-thiouridine in position 8 of tRNAs, which functions as a near-UV photosensor. Also catalyzes the transfer of sulfur to the sulfur carrier protein ThiS, forming ThiS-thiocarboxylate. This is a step in the synthesis of thiazole, in the thiamine biosynthesis pathway. The sulfur is donated as persulfide by IscS. This chain is Probable tRNA sulfurtransferase, found in Bacillus cereus (strain ATCC 10987 / NRS 248).